Here is a 302-residue protein sequence, read N- to C-terminus: ATP synthase gamma chain (302 aa).

The protein belongs to the ATPase gamma chain family. F-type ATPases have 2 components, CF(1) - the catalytic core - and CF(0) - the membrane proton channel. CF(1) has five subunits: alpha(3), beta(3), gamma(1), delta(1), epsilon(1). CF(0) has three main subunits: a, b and c.

The protein resides in the cell inner membrane. Produces ATP from ADP in the presence of a proton gradient across the membrane. The gamma chain is believed to be important in regulating ATPase activity and the flow of protons through the CF(0) complex. This is ATP synthase gamma chain from Bartonella bacilliformis (strain ATCC 35685 / KC583 / Herrer 020/F12,63).